Here is a 256-residue protein sequence, read N- to C-terminus: 5'-nucleotidase SurE (256 aa).

Residues D8, D9, S42, and N94 each coordinate a divalent metal cation.

Belongs to the SurE nucleotidase family. A divalent metal cation serves as cofactor.

The protein resides in the cytoplasm. It carries out the reaction a ribonucleoside 5'-phosphate + H2O = a ribonucleoside + phosphate. Its function is as follows. Nucleotidase that shows phosphatase activity on nucleoside 5'-monophosphates. The protein is 5'-nucleotidase SurE of Ehrlichia chaffeensis (strain ATCC CRL-10679 / Arkansas).